The sequence spans 172 residues: Large ribosomal subunit protein uL10 (172 aa).

The protein belongs to the universal ribosomal protein uL10 family. In terms of assembly, part of the ribosomal stalk of the 50S ribosomal subunit. The N-terminus interacts with L11 and the large rRNA to form the base of the stalk. The C-terminus forms an elongated spine to which L12 dimers bind in a sequential fashion forming a multimeric L10(L12)X complex.

Its function is as follows. Forms part of the ribosomal stalk, playing a central role in the interaction of the ribosome with GTP-bound translation factors. The polypeptide is Large ribosomal subunit protein uL10 (Francisella tularensis subsp. mediasiatica (strain FSC147)).